Consider the following 132-residue polypeptide: RING-H2 finger protein ATL39 (132 aa).

A helical transmembrane segment spans residues 10 to 30 (TIVFAFASIGFIAFYIINYYI). An RING-type; atypical zinc finger spans residues 85-127 (CVVCLNEFKDDETLRLVPPCVHVFHADCVDIWLSHSSTCPICR).

Belongs to the RING-type zinc finger family. ATL subfamily.

It localises to the membrane. The enzyme catalyses S-ubiquitinyl-[E2 ubiquitin-conjugating enzyme]-L-cysteine + [acceptor protein]-L-lysine = [E2 ubiquitin-conjugating enzyme]-L-cysteine + N(6)-ubiquitinyl-[acceptor protein]-L-lysine.. Its pathway is protein modification; protein ubiquitination. The polypeptide is RING-H2 finger protein ATL39 (ATL39) (Arabidopsis thaliana (Mouse-ear cress)).